The primary structure comprises 383 residues: MSKRRVVVGMSGGVDSSVTAWLLKEQGYDVVGLFMKNWEDDDDGEYCSTRQDWIDVVSVADLIGIDVEAVNFAAEYKDRVFAEFLREYSAGRTPNPDVLCNAEIKFKAFLDHAMSLDAEMIATGHYARVRERDGRFELLKAYDHTKDQSYFLHRLNQAQLSKTMFPLGEIPKTKVREIAAQIGLPNAKKKDSTGICFIGERPFRDFLNRYLPTKPGPMKTPDGKIVGEHIGLAFYTFGQRKGIGLGGSKSGNGDPWFVAAKDIASNTLYVVQGHDHPWLLARELVAGNVSWVAGEPPAEGFACGAKTRYRQADAACAFGAATPGPAGEARFSLAFDDAQWAVTPGQSAVLYDGEICLGGGIIESAVIGQPGQTAPARALAEAR.

ATP is bound by residues Gly9 to Ser16 and Met35. Residues Asn95–Asp97 form an interaction with target base in tRNA region. Residue Cys100 is the Nucleophile of the active site. The cysteines at positions 100 and 196 are disulfide-linked. Residue Gly124 coordinates ATP. Residues Lys146–Gln148 form an interaction with tRNA region. The active-site Cysteine persulfide intermediate is the Cys196. An interaction with tRNA region spans residues Arg308–Tyr309.

This sequence belongs to the MnmA/TRMU family.

It is found in the cytoplasm. The enzyme catalyses S-sulfanyl-L-cysteinyl-[protein] + uridine(34) in tRNA + AH2 + ATP = 2-thiouridine(34) in tRNA + L-cysteinyl-[protein] + A + AMP + diphosphate + H(+). Its function is as follows. Catalyzes the 2-thiolation of uridine at the wobble position (U34) of tRNA, leading to the formation of s(2)U34. The sequence is that of tRNA-specific 2-thiouridylase MnmA from Burkholderia lata (strain ATCC 17760 / DSM 23089 / LMG 22485 / NCIMB 9086 / R18194 / 383).